Reading from the N-terminus, the 525-residue chain is GMP synthase [glutamine-hydrolyzing] (525 aa).

One can recognise a Glutamine amidotransferase type-1 domain in the interval 9–207 (RILILDFGSQ…VRDICQCEAL (199 aa)). Residue C86 is the Nucleophile of the active site. Active-site residues include H181 and E183. The GMPS ATP-PPase domain occupies 208 to 400 (WTPAKIIDDA…LGLPYDMLYR (193 aa)). Residue 235 to 241 (SGGVDSS) coordinates ATP.

In terms of assembly, homodimer.

The enzyme catalyses XMP + L-glutamine + ATP + H2O = GMP + L-glutamate + AMP + diphosphate + 2 H(+). It functions in the pathway purine metabolism; GMP biosynthesis; GMP from XMP (L-Gln route): step 1/1. Catalyzes the synthesis of GMP from XMP. This chain is GMP synthase [glutamine-hydrolyzing], found in Citrobacter koseri (strain ATCC BAA-895 / CDC 4225-83 / SGSC4696).